The chain runs to 215 residues: MKTNLADIRKEYSSRSLDTKDILPSPVEQFRLWLNQALEAGALEATAMNLATVNEAGKPASRIVLLKGIEHGSFVFYTNYKSHKGSDITHNSFGALNFFWPELERQVRIEGKITKVSPEDSDTYFNSRPYQSKIGAWVSDQSKEVASREELESKITYYENKYPEGSVVPRPAHWGGYTLKPAYFEFWQGRPSRLHDRIVYDLEGDIRWNVFRICP.

Residues 9-12 (RKEY) and Lys-67 contribute to the substrate site. Residues 62 to 67 (RIVLLK), 77 to 78 (YT), Lys-84, and Gln-106 each bind FMN. The substrate site is built by Tyr-124, Arg-128, and Ser-132. FMN is bound by residues 141-142 (QS) and Trp-187. Substrate is bound at residue 193–195 (RLH). Arg-197 contacts FMN.

It belongs to the pyridoxamine 5'-phosphate oxidase family. Homodimer. It depends on FMN as a cofactor.

The enzyme catalyses pyridoxamine 5'-phosphate + O2 + H2O = pyridoxal 5'-phosphate + H2O2 + NH4(+). It carries out the reaction pyridoxine 5'-phosphate + O2 = pyridoxal 5'-phosphate + H2O2. The protein operates within cofactor metabolism; pyridoxal 5'-phosphate salvage; pyridoxal 5'-phosphate from pyridoxamine 5'-phosphate: step 1/1. It functions in the pathway cofactor metabolism; pyridoxal 5'-phosphate salvage; pyridoxal 5'-phosphate from pyridoxine 5'-phosphate: step 1/1. In terms of biological role, catalyzes the oxidation of either pyridoxine 5'-phosphate (PNP) or pyridoxamine 5'-phosphate (PMP) into pyridoxal 5'-phosphate (PLP). This chain is Pyridoxine/pyridoxamine 5'-phosphate oxidase, found in Cytophaga hutchinsonii (strain ATCC 33406 / DSM 1761 / CIP 103989 / NBRC 15051 / NCIMB 9469 / D465).